We begin with the raw amino-acid sequence, 413 residues long: MHYYVLFTFLTLDLAPVALSLSTCSALDMDQFMRKRIEAIRGQILSKLKLNSPPEDYPEPGEVSQDVISIYNSTRDLLQEKANERATSCERERSEDEYYAKEVYKIDMLPYYTSENVIPPSYTTPYFRIVRFDVSSMEKNASNLVKAEFRVFRLMNTKARVSEQRIELYQILKSKDLASPTQRYIDSKVVKTRAEGEWLSFDVTEAVNEWLHHKDRNLGFKISLHCPCCTFIPSNNYIIPNKSEELETRFAGIDDAYMYAGGDSKSKTGRKKHTGRTPHLLLMLLPSYRLESQQSSRRKKRALDAAYCFRNVQDNCCLRPLYIDFKKDLGWKWIHEPKGYNANFCAGACPYLWSSDTQHSRVLSLYNTINPEASASPCCVSQDLDSLTILYYIGNKPKIEQLSNMIVKSCKCS.

The signal sequence occupies residues 1–19; that stretch reads MHYYVLFTFLTLDLAPVAL. Asparagine 72, asparagine 140, and asparagine 241 each carry an N-linked (GlcNAc...) asparagine glycan. Disulfide bonds link cysteine 308–cysteine 317, cysteine 316–cysteine 379, cysteine 345–cysteine 410, and cysteine 349–cysteine 412.

The protein belongs to the TGF-beta family. As to quaternary structure, interacts with Transforming growth factor beta-2 (TGF-beta-2) chain; interaction is non-covalent and maintains (TGF-beta-2) in a latent state. In terms of assembly, homodimer; disulfide-linked. Interacts with TGF-beta receptors (tgfbr1 and tgfbr2), leading to signal transduction. Post-translationally, the precursor proprotein is cleaved in the Golgi apparatus to form Transforming growth factor beta-2 (TGF-beta-2) and Latency-associated peptide (LAP) chains, which remain non-covalently linked, rendering TGF-beta-2 inactive.

The protein localises to the secreted. It is found in the extracellular space. The protein resides in the extracellular matrix. Functionally, precursor of the Latency-associated peptide (LAP) and Transforming growth factor beta-2 (TGF-beta-2) chains, which constitute the regulatory and active subunit of TGF-beta-2, respectively. In terms of biological role, required to maintain the Transforming growth factor beta-2 (TGF-beta-2) chain in a latent state during storage in extracellular matrix. Associates non-covalently with TGF-beta-2 and regulates its activation via interaction with 'milieu molecules', such as ltbp1 and lrrc32/garp, that control activation of TGF-beta-2. Its function is as follows. Multifunctional protein that regulates various processes such as angiogenesis and heart development. Activation into mature form follows different steps: following cleavage of the proprotein in the Golgi apparatus, Latency-associated peptide (LAP) and Transforming growth factor beta-2 (TGF-beta-2) chains remain non-covalently linked rendering TGF-beta-2 inactive during storage in extracellular matrix. At the same time, LAP chain interacts with 'milieu molecules', such as ltbp1 and lrrc32/garp, that control activation of TGF-beta-2 and maintain it in a latent state during storage in extracellular milieus. Once activated following release of LAP, TGF-beta-2 acts by binding to TGF-beta receptors (tgfbr1 and tgfbr2), which transduce signal. This Xenopus laevis (African clawed frog) protein is Transforming growth factor beta-2 proprotein (tgfb2).